Consider the following 65-residue polypeptide: Disintegrin CC8A (65 aa).

A Disintegrin domain is found at 1 to 65 (MNSAHPCCDP…SDCPRNRIKK (65 aa)). 4 cysteine pairs are disulfide-bonded: cysteine 7–cysteine 30, cysteine 21–cysteine 27, cysteine 26–cysteine 51, and cysteine 39–cysteine 58. Residues 43–45 (RGD) carry the Cell attachment site motif.

Belongs to the disintegrin family. Dimeric disintegrin subfamily. Heterodimer with CC8B; disulfide-linked. In terms of tissue distribution, expressed by the venom gland.

The protein resides in the secreted. Functionally, inhibits integrins alpha-IIb/beta-3 (ITGA2B/ITGB3), alpha-V/beta-3 (ITGAV/ITGB3), and alpha-5/beta-1 (ITGA5/ITGB1). In Cerastes cerastes (Horned desert viper), this protein is Disintegrin CC8A.